The chain runs to 660 residues: Genome-linked protein precursor (660 aa).

A signal peptide spans methionine 1–alanine 25. The next 2 helical transmembrane spans lie at alanine 131–tyrosine 151 and alanine 165–isoleucine 185. The region spanning valine 224–glutamate 416 is the Peptidase S39 domain. Catalysis depends on for protease activity residues histidine 272, aspartate 304, and serine 373. Disordered regions lie at residues glutamate 463–proline 490 and threonine 595–arginine 660.

This sequence belongs to the peptidase S39B family.

The protein resides in the host membrane. Its function is as follows. Precursor from which the VPg molecule is probably released at the onset of the RNA synthesis. Essential for virus replication. This is Genome-linked protein precursor from Euphorbia pulcherrima (Poinsettia).